The primary structure comprises 178 residues: Large ribosomal subunit protein uL6 (178 aa).

The protein belongs to the universal ribosomal protein uL6 family. Part of the 50S ribosomal subunit.

In terms of biological role, this protein binds to the 23S rRNA, and is important in its secondary structure. It is located near the subunit interface in the base of the L7/L12 stalk, and near the tRNA binding site of the peptidyltransferase center. The chain is Large ribosomal subunit protein uL6 from Sulfurovum sp. (strain NBC37-1).